We begin with the raw amino-acid sequence, 177 residues long: Shikimate kinase (177 aa).

17–22 (GVGKTT) provides a ligand contact to ATP. A Mg(2+)-binding site is contributed by Thr-21. Residues Asp-39, Arg-63, and Gly-86 each coordinate substrate. Arg-125 contacts ATP. Arg-143 lines the substrate pocket. An ATP-binding site is contributed by Arg-159.

The protein belongs to the shikimate kinase family. Monomer. It depends on Mg(2+) as a cofactor.

It localises to the cytoplasm. The catalysed reaction is shikimate + ATP = 3-phosphoshikimate + ADP + H(+). The protein operates within metabolic intermediate biosynthesis; chorismate biosynthesis; chorismate from D-erythrose 4-phosphate and phosphoenolpyruvate: step 5/7. Functionally, catalyzes the specific phosphorylation of the 3-hydroxyl group of shikimic acid using ATP as a cosubstrate. This Bacillus licheniformis (strain ATCC 14580 / DSM 13 / JCM 2505 / CCUG 7422 / NBRC 12200 / NCIMB 9375 / NCTC 10341 / NRRL NRS-1264 / Gibson 46) protein is Shikimate kinase.